Here is a 494-residue protein sequence, read N- to C-terminus: Glutamyl-tRNA reductase (494 aa).

Residues 58–61, Ser118, 123–125, and Gln129 contribute to the substrate site; these read TCNR and EQQ. Catalysis depends on Cys59, which acts as the Nucleophile. An NADP(+)-binding site is contributed by 205–210; it reads GAGAMA. The tract at residues 448-494 is disordered; the sequence is KGANAGSGQRKKQKPQENRVSTARAVYRSTYQDLTQASTPGGKDDDQ. Polar residues predominate over residues 476–486; sequence STYQDLTQAST.

It belongs to the glutamyl-tRNA reductase family. In terms of assembly, homodimer.

It carries out the reaction (S)-4-amino-5-oxopentanoate + tRNA(Glu) + NADP(+) = L-glutamyl-tRNA(Glu) + NADPH + H(+). It participates in porphyrin-containing compound metabolism; protoporphyrin-IX biosynthesis; 5-aminolevulinate from L-glutamyl-tRNA(Glu): step 1/2. Catalyzes the NADPH-dependent reduction of glutamyl-tRNA(Glu) to glutamate 1-semialdehyde (GSA). The sequence is that of Glutamyl-tRNA reductase from Corynebacterium urealyticum (strain ATCC 43042 / DSM 7109).